We begin with the raw amino-acid sequence, 270 residues long: Tryptophan synthase alpha chain (270 aa).

Catalysis depends on proton acceptor residues E49 and D60.

Belongs to the TrpA family. In terms of assembly, tetramer of two alpha and two beta chains.

The enzyme catalyses (1S,2R)-1-C-(indol-3-yl)glycerol 3-phosphate + L-serine = D-glyceraldehyde 3-phosphate + L-tryptophan + H2O. It functions in the pathway amino-acid biosynthesis; L-tryptophan biosynthesis; L-tryptophan from chorismate: step 5/5. Its function is as follows. The alpha subunit is responsible for the aldol cleavage of indoleglycerol phosphate to indole and glyceraldehyde 3-phosphate. In Gluconobacter oxydans (strain 621H) (Gluconobacter suboxydans), this protein is Tryptophan synthase alpha chain.